Here is a 595-residue protein sequence, read N- to C-terminus: Aspartate--tRNA ligase (595 aa).

Residue E171 coordinates L-aspartate. Residues Q195–K198 are aspartate. R217 serves as a coordination point for L-aspartate. ATP contacts are provided by residues R217 to E219 and Q226. An L-aspartate-binding site is contributed by H448. Residue E482 participates in ATP binding. R489 is an L-aspartate binding site. G534–R537 is a binding site for ATP.

Belongs to the class-II aminoacyl-tRNA synthetase family. Type 1 subfamily. In terms of assembly, homodimer.

It localises to the cytoplasm. The enzyme catalyses tRNA(Asp) + L-aspartate + ATP = L-aspartyl-tRNA(Asp) + AMP + diphosphate. Catalyzes the attachment of L-aspartate to tRNA(Asp) in a two-step reaction: L-aspartate is first activated by ATP to form Asp-AMP and then transferred to the acceptor end of tRNA(Asp). This is Aspartate--tRNA ligase from Erwinia tasmaniensis (strain DSM 17950 / CFBP 7177 / CIP 109463 / NCPPB 4357 / Et1/99).